A 193-amino-acid chain; its full sequence is dCTP deaminase (193 aa).

DCTP-binding positions include 110–115, Asp128, 136–138, Tyr171, Lys178, and Gln182; these read RSSLAR and VLE. The active-site Proton donor/acceptor is the Glu138. The interval 170-193 is disordered; it reads PYNSRQDAKYRGQQGAVASRIDKD.

This sequence belongs to the dCTP deaminase family. Homotrimer.

It catalyses the reaction dCTP + H2O + H(+) = dUTP + NH4(+). Its pathway is pyrimidine metabolism; dUMP biosynthesis; dUMP from dCTP (dUTP route): step 1/2. Its function is as follows. Catalyzes the deamination of dCTP to dUTP. The polypeptide is dCTP deaminase (Yersinia enterocolitica serotype O:8 / biotype 1B (strain NCTC 13174 / 8081)).